A 156-amino-acid chain; its full sequence is Large ribosomal subunit protein uL15 (156 aa).

Residues 1–48 (MKLHDLKPTPGSRKDRKRVGRGPGGTDKTAGRGHKGQKSRSGAGKGAF) form a disordered region.

This sequence belongs to the universal ribosomal protein uL15 family. As to quaternary structure, part of the 50S ribosomal subunit. Contacts proteins L4, L21 and L35.

Its function is as follows. Binds to the 23S rRNA. In Deinococcus radiodurans (strain ATCC 13939 / DSM 20539 / JCM 16871 / CCUG 27074 / LMG 4051 / NBRC 15346 / NCIMB 9279 / VKM B-1422 / R1), this protein is Large ribosomal subunit protein uL15 (rplO).